A 277-amino-acid polypeptide reads, in one-letter code: SPX domain-containing protein 3 (277 aa).

The 152-residue stretch at 1–152 (MKFGKRLKKQ…GRLLRLPFIE (152 aa)) folds into the SPX domain.

This Oryza sativa subsp. indica (Rice) protein is SPX domain-containing protein 3 (SPX3).